A 140-amino-acid polypeptide reads, in one-letter code: Small ribosomal subunit protein uS12 (140 aa).

2 disordered regions span residues 1–20 (MPTI…VKSD) and 35–55 (QTNV…TMTP). Asp102 bears the 3-methylthioaspartic acid mark. A disordered region spans residues 121-140 (DGRMQGRSKYGTKRPKAAKK). Positions 130–140 (YGTKRPKAAKK) are enriched in basic residues.

The protein belongs to the universal ribosomal protein uS12 family. As to quaternary structure, part of the 30S ribosomal subunit. Contacts proteins S8 and S17. May interact with IF1 in the 30S initiation complex.

Functionally, with S4 and S5 plays an important role in translational accuracy. Its function is as follows. Interacts with and stabilizes bases of the 16S rRNA that are involved in tRNA selection in the A site and with the mRNA backbone. Located at the interface of the 30S and 50S subunits, it traverses the body of the 30S subunit contacting proteins on the other side and probably holding the rRNA structure together. The combined cluster of proteins S8, S12 and S17 appears to hold together the shoulder and platform of the 30S subunit. The polypeptide is Small ribosomal subunit protein uS12 (Exiguobacterium sp. (strain ATCC BAA-1283 / AT1b)).